We begin with the raw amino-acid sequence, 243 residues long: Phosphoribosylaminoimidazole-succinocarboxamide synthase (243 aa).

The protein belongs to the SAICAR synthetase family.

It carries out the reaction 5-amino-1-(5-phospho-D-ribosyl)imidazole-4-carboxylate + L-aspartate + ATP = (2S)-2-[5-amino-1-(5-phospho-beta-D-ribosyl)imidazole-4-carboxamido]succinate + ADP + phosphate + 2 H(+). Its pathway is purine metabolism; IMP biosynthesis via de novo pathway; 5-amino-1-(5-phospho-D-ribosyl)imidazole-4-carboxamide from 5-amino-1-(5-phospho-D-ribosyl)imidazole-4-carboxylate: step 1/2. The protein is Phosphoribosylaminoimidazole-succinocarboxamide synthase of Methanobrevibacter smithii (strain ATCC 35061 / DSM 861 / OCM 144 / PS).